Reading from the N-terminus, the 302-residue chain is GrpE protein homolog 1, mitochondrial (302 aa).

A mitochondrion-targeting transit peptide spans 1–39 (MLVSRVLSRVSRSAGLRSSFSSVVTPKRNQIPIVASRFH). A disordered region spans residues 77–97 (SAEPKGNESNTEVPKTGETSE).

This sequence belongs to the GrpE family. Probable component of the PAM complex, at least composed of SSC1 (mtHsp70), MGE1, TIM44, PAM16/TIM16, PAM17 and PAM18/TIM14. Interacts with SSQ1.

It localises to the mitochondrion matrix. Its function is as follows. Essential component of the PAM complex, a complex required for the translocation of transit peptide-containing proteins from the inner membrane into the mitochondrial matrix in an ATP-dependent manner. Seems to control the nucleotide-dependent binding of mitochondrial HSP70 to substrate proteins. Binds ATP. Interacts with copper ions Cu(2+). The chain is GrpE protein homolog 1, mitochondrial from Arabidopsis thaliana (Mouse-ear cress).